The primary structure comprises 591 residues: Proteasome-associated ATPase (591 aa).

Residues 8–77 (DSVAAARELE…LREEVDRLGQ (70 aa)) are a coiled coil. 278–283 (GCGKTL) serves as a coordination point for ATP. Residues 590 to 591 (YL) form a docks into pockets in the proteasome alpha-ring region.

This sequence belongs to the AAA ATPase family. In terms of assembly, homohexamer. Assembles into a hexameric ring structure that caps the 20S proteasome core. Strongly interacts with the prokaryotic ubiquitin-like protein Pup through a hydrophobic interface; the interacting region of ARC lies in its N-terminal coiled-coil domain. There is one Pup binding site per ARC hexamer ring. Upon ATP-binding, the C-terminus of ARC interacts with the alpha-rings of the proteasome core, possibly by binding to the intersubunit pockets.

It participates in protein degradation; proteasomal Pup-dependent pathway. Functionally, ATPase which is responsible for recognizing, binding, unfolding and translocation of pupylated proteins into the bacterial 20S proteasome core particle. May be essential for opening the gate of the 20S proteasome via an interaction with its C-terminus, thereby allowing substrate entry and access to the site of proteolysis. Thus, the C-termini of the proteasomal ATPase may function like a 'key in a lock' to induce gate opening and therefore regulate proteolysis. The sequence is that of Proteasome-associated ATPase from Rhodococcus jostii (strain RHA1).